The chain runs to 368 residues: Quinolinate synthase (368 aa).

The iminosuccinate site is built by His46 and Ser63. Residue Cys110 coordinates [4Fe-4S] cluster. Residues 141–143 and Ser162 each bind iminosuccinate; that span reads YVN. Cys230 is a binding site for [4Fe-4S] cluster. Residues 256-258 and Thr273 each bind iminosuccinate; that span reads HPE. A [4Fe-4S] cluster-binding site is contributed by Cys320.

The protein belongs to the quinolinate synthase family. Type 3 subfamily. [4Fe-4S] cluster serves as cofactor.

The protein localises to the cytoplasm. The enzyme catalyses iminosuccinate + dihydroxyacetone phosphate = quinolinate + phosphate + 2 H2O + H(+). It participates in cofactor biosynthesis; NAD(+) biosynthesis; quinolinate from iminoaspartate: step 1/1. Its function is as follows. Catalyzes the condensation of iminoaspartate with dihydroxyacetone phosphate to form quinolinate. This chain is Quinolinate synthase, found in Bacillus cereus (strain ATCC 14579 / DSM 31 / CCUG 7414 / JCM 2152 / NBRC 15305 / NCIMB 9373 / NCTC 2599 / NRRL B-3711).